The chain runs to 171 residues: Adenine phosphoribosyltransferase (171 aa).

It belongs to the purine/pyrimidine phosphoribosyltransferase family. Homodimer.

Its subcellular location is the cytoplasm. The enzyme catalyses AMP + diphosphate = 5-phospho-alpha-D-ribose 1-diphosphate + adenine. The protein operates within purine metabolism; AMP biosynthesis via salvage pathway; AMP from adenine: step 1/1. In terms of biological role, catalyzes a salvage reaction resulting in the formation of AMP, that is energically less costly than de novo synthesis. This is Adenine phosphoribosyltransferase from Trichlorobacter lovleyi (strain ATCC BAA-1151 / DSM 17278 / SZ) (Geobacter lovleyi).